The following is a 768-amino-acid chain: MSFTRWEVFFGLSVLALTMPFSAGVTNLRDVSAINNLYITLGAPSLHHWLAFGGDPCGEKWQGVVCDSSNITEIRIPGMKVGGGLSDTLADFSSIQVMDFSSNHISGTIPQALPSSIRNLSLSSNRFTGNIPFTLSFLSDLSELSLGSNLLSGEIPDYFQQLSKLTKLDLSSNILEGHLPSSMGDLASLKILYLQDNKLTGTLDVIEDLFLTDLNVENNLFSGPIPPNLLKIPNFKKDGTPFNTSIITPPPPPVVDPPPATHRAPPVPRIPPVSGVPPAPFAPFAPLQPQQHPPPSPPLVWSPPSSDNGGGDPWNSVSGQPTLQISPPSGSGSGKFWSTQRIILVVSSVAIIVLVSGLCVTLWRCCRSKIYNRYYSGARKDLQRPYFNKPPSQPTPTMGKVSREPMVKPFDGYGAGDRKYGYPMPQRAEESRRAMPPTSYYNKDVNTPQKPLQQPPRQFQSNDTASKRAAHFPPGLNSSSSATVFTIASLQQYTNNFSEENIIGEGSIGNVYRAELRHGKFLAVKKLSNTINRTQSDGEFLNLVSNVLKLKRGHILELLGYCNEFGQRLLVYEYCPNGSLQDALHLDRKLHKKLTWNVRINIALGASKALQFLHEVCQPPVVHQNFKSSKVLLDGKLSVRVADSGLAYMLPPRPTSQMAGYAAPEVEYGSYTCQSDVFSLGVVMLELLTGRRPFDRTRPRGHQTLAQWAIPRLHDIDALTRMVDPSLHGAYPMKSLSRFADIISRSLQMEPGFRPPISEIVQDLQHMI.

An N-terminal signal peptide occupies residues 1-24 (MSFTRWEVFFGLSVLALTMPFSAG). At 25–341 (VTNLRDVSAI…GSGKFWSTQR (317 aa)) the chain is on the extracellular side. An intrachain disulfide couples Cys57 to Cys66. Asn70 is a glycosylation site (N-linked (GlcNAc...) asparagine). LRR repeat units follow at residues 94–115 (SIQV…ALPS), 116–139 (SIRN…SFLS), 140–162 (DLSE…FQQL), 164–186 (KLTK…MGDL), 188–210 (SLKI…EDLF), and 211–231 (LTDL…NLLK). N-linked (GlcNAc...) asparagine glycosylation is present at Asn119. Positions 241 to 334 (PFNTSIITPP…ISPPSGSGSG (94 aa)) are disordered. A glycan (N-linked (GlcNAc...) asparagine) is linked at Asn243. Composition is skewed to pro residues over residues 248–283 (TPPP…PFAP) and 291–301 (QHPPPSPPLVW). The span at 315 to 334 (NSVSGQPTLQISPPSGSGSG) shows a compositional bias: polar residues. A helical transmembrane segment spans residues 342-362 (IILVVSSVAIIVLVSGLCVTL). Over 363–768 (WRCCRSKIYN…EIVQDLQHMI (406 aa)) the chain is Cytoplasmic. The disordered stretch occupies residues 385 to 477 (PYFNKPPSQP…RAAHFPPGLN (93 aa)). Polar residues predominate over residues 439 to 464 (SYYNKDVNTPQKPLQQPPRQFQSNDT). In terms of domain architecture, Protein kinase spans 497-768 (FSEENIIGEG…EIVQDLQHMI (272 aa)). ATP-binding positions include 503–511 (IGEGSIGNV) and Lys525.

It belongs to the protein kinase superfamily. Ser/Thr protein kinase family. In terms of assembly, interacts (via intra-cellular domain) with AN; this interaction is not required for correct subcellular localization and recycling of SUB. Binds to QKY and POQ at the plasma membrane. Binds to QKY at plasmodesmata (PD) in root epidermal cells to promote tissue morphogenesis. In terms of tissue distribution, expressed in leaves, stems, inflorescences, flower buds and developing root epidermis.

The protein resides in the cell membrane. It is found in the cell junction. Its subcellular location is the plasmodesma. Its activity is regulated as follows. Regulated at the post-transcriptional level. In terms of biological role, regulates the expression of transcription factors that define the cell fates. Acts in a non-cell-autonomous fashion, functions in a radial inside-out signaling process, and mediates cell morphogenesis and cell fate across clonally distinct cell layers in floral primordia, developing ovules, and root meristems. Seems to be required for the regulation of cell shape and the orientation of the mitotic division plane. Involved in root hair specification, in the formation of the outer integument and the shape of organs such as carpels and petals and is necessary for the shape and height of the stem. Non-functional SUB proteins are retained in the endoplasmic reticulum and degraded by endoplasmic reticulum-associated degradation (ERAD). Collaboratively with QKY and POQ, regulates cell growth anisotropy during gynoecium development, thus linking together cell-cell communication and cellular growth. Together with QKY, links RLK-dependent signal transduction and intercellular communication mediated by plasmodesmata (PD) to regulate tissue morphogenesis. This Arabidopsis thaliana (Mouse-ear cress) protein is Protein STRUBBELIG.